The following is a 358-amino-acid chain: Probable branched-chain-amino-acid aminotransferase (358 aa).

Position 196 is an N6-(pyridoxal phosphate)lysine (Lys196).

This sequence belongs to the class-IV pyridoxal-phosphate-dependent aminotransferase family. Requires pyridoxal 5'-phosphate as cofactor.

It carries out the reaction L-leucine + 2-oxoglutarate = 4-methyl-2-oxopentanoate + L-glutamate. The enzyme catalyses L-isoleucine + 2-oxoglutarate = (S)-3-methyl-2-oxopentanoate + L-glutamate. The catalysed reaction is L-valine + 2-oxoglutarate = 3-methyl-2-oxobutanoate + L-glutamate. It participates in amino-acid biosynthesis; L-isoleucine biosynthesis; L-isoleucine from 2-oxobutanoate: step 4/4. Its pathway is amino-acid biosynthesis; L-leucine biosynthesis; L-leucine from 3-methyl-2-oxobutanoate: step 4/4. The protein operates within amino-acid biosynthesis; L-valine biosynthesis; L-valine from pyruvate: step 4/4. Acts on leucine, isoleucine and valine. The protein is Probable branched-chain-amino-acid aminotransferase (ilvE) of Staphylococcus epidermidis (strain ATCC 12228 / FDA PCI 1200).